The sequence spans 1173 residues: AT-rich interactive domain-containing protein 5B (1173 aa).

Lysine 130 is covalently cross-linked (Glycyl lysine isopeptide (Lys-Gly) (interchain with G-Cter in SUMO2)). The disordered stretch occupies residues 249–283; it reads PNLKGRPRKKKPCPQRRDSFSGGKDPNNNSDGKSV. A compositionally biased stretch (basic residues) spans 253-262; it reads GRPRKKKPCP. The residue at position 267 (serine 267) is a Phosphoserine. An ARID domain is found at 322-414; sequence RADEQAFLVA…LILPYERFIK (93 aa). The residue at position 340 (lysine 340) is an N6,N6-dimethyllysine. Residues 416–607 are disordered; the sequence is EEDKPLPPIK…QPPLANQSEV (192 aa). Lysine 449 is covalently cross-linked (Glycyl lysine isopeptide (Lys-Gly) (interchain with G-Cter in SUMO2)). Residues 450-462 are compositionally biased toward basic and acidic residues; that stretch reads HEISKSKKEKENA. Residues lysine 497 and lysine 499 each participate in a glycyl lysine isopeptide (Lys-Gly) (interchain with G-Cter in SUMO2) cross-link. Low complexity predominate over residues 547–557; that stretch reads SAPLAPTPGTG. Residues 593 to 605 are compositionally biased toward polar residues; sequence GFSTTQPPLANQS. Residues lysine 763 and lysine 769 each participate in a glycyl lysine isopeptide (Lys-Gly) (interchain with G-Cter in SUMO2) cross-link. Disordered regions lie at residues 777-802, 877-924, and 936-965; these read EPRF…VEKR, KKSA…GTSQ, and HPKA…KPHP. Basic residues predominate over residues 782 to 796; the sequence is FSKHHLSPSKKSRGR. Residues lysine 878, lysine 901, lysine 905, and lysine 920 each participate in a glycyl lysine isopeptide (Lys-Gly) (interchain with G-Cter in SUMO2) cross-link. Glycyl lysine isopeptide (Lys-Gly) (interchain with G-Cter in SUMO2) cross-links involve residues lysine 973, lysine 985, and lysine 998. Serine 1017 is subject to Phosphoserine. Positions 1017–1055 are disordered; the sequence is SPLDPAKEVSGKEKASEQESEGSKAAHSGHSGGTSEGHK. Residues 1021-1040 show a composition bias toward basic and acidic residues; the sequence is PAKEVSGKEKASEQESEGSK. Residues lysine 1040 and lysine 1055 each participate in a glycyl lysine isopeptide (Lys-Gly) (interchain with G-Cter in SUMO2) cross-link. Phosphoserine is present on serine 1118.

Belongs to the ARID5B family. Methylation at Lys-340 prevents DNA-binding. Demethylation by PHF2 promotes recruitment of the PHF2-ARID5B complex to promoters.

It localises to the nucleus. In terms of biological role, transcription coactivator that binds to the 5'-AATA[CT]-3' core sequence and plays a key role in adipogenesis and liver development. Acts by forming a complex with phosphorylated PHF2, which mediates demethylation at Lys-340, leading to target the PHF2-ARID5B complex to target promoters, where PHF2 mediates demethylation of dimethylated 'Lys-9' of histone H3 (H3K9me2), followed by transcription activation of target genes. The PHF2-ARID5B complex acts as a coactivator of HNF4A in liver. Required for adipogenesis: regulates triglyceride metabolism in adipocytes by regulating expression of adipogenic genes. Overexpression leads to induction of smooth muscle marker genes, suggesting that it may also act as a regulator of smooth muscle cell differentiation and proliferation. This is AT-rich interactive domain-containing protein 5B (ARID5B) from Bos taurus (Bovine).